We begin with the raw amino-acid sequence, 383 residues long: 3-dehydroquinate synthase (383 aa).

NAD(+) is bound by residues 81-86, 115-119, 139-140, lysine 152, and lysine 161; these read EGEVSK, GVVGD, and TS. 3 residues coordinate Zn(2+): glutamate 194, histidine 256, and histidine 274.

This sequence belongs to the sugar phosphate cyclases superfamily. Dehydroquinate synthase family. The cofactor is Co(2+). It depends on Zn(2+) as a cofactor. Requires NAD(+) as cofactor.

It is found in the cytoplasm. The enzyme catalyses 7-phospho-2-dehydro-3-deoxy-D-arabino-heptonate = 3-dehydroquinate + phosphate. The protein operates within metabolic intermediate biosynthesis; chorismate biosynthesis; chorismate from D-erythrose 4-phosphate and phosphoenolpyruvate: step 2/7. Functionally, catalyzes the conversion of 3-deoxy-D-arabino-heptulosonate 7-phosphate (DAHP) to dehydroquinate (DHQ). This is 3-dehydroquinate synthase from Nitrobacter hamburgensis (strain DSM 10229 / NCIMB 13809 / X14).